The chain runs to 165 residues: V-type proton ATPase 16 kDa proteolipid subunit (165 aa).

The Lumenal portion of the chain corresponds to 1–10 (MPSTFSGDET). Residues 11–33 (APFFGFLGAAAALVFSCMGAAYG) form a helical membrane-spanning segment. Over 34–55 (TAKSGVGVASMGVMRPELVMKS) the chain is Cytoplasmic. A helical membrane pass occupies residues 56 to 76 (IVPVVMAGVLGIYGLIIAVII). The Lumenal portion of the chain corresponds to 77–95 (STGINPKTKSYYLFDGYAH). Residues 96-117 (LSSGLACGLAGLSAGMAIGIVG) form a helical membrane-spanning segment. Topologically, residues 118 to 129 (DAGVRANAQQPK) are cytoplasmic. Residues 130-155 (LFVGMILILIFAEALALYGLIVGIIL) traverse the membrane as a helical segment. Residues 156 to 165 (SSRAGQSRAE) are Lumenal-facing.

Belongs to the V-ATPase proteolipid subunit family. As to quaternary structure, V-ATPase is a heteromultimeric enzyme composed of a peripheral catalytic V1 complex (main components: subunits A, B, C, D, E, and F) attached to an integral membrane V0 proton pore complex (main component: the proteolipid protein; which is present as a hexamer that forms the proton-conducting pore).

Its subcellular location is the vacuole membrane. Functionally, proton-conducting pore forming subunit of the membrane integral V0 complex of vacuolar ATPase. V-ATPase is responsible for acidifying a variety of intracellular compartments in eukaryotic cells. This is V-type proton ATPase 16 kDa proteolipid subunit from Nicotiana tabacum (Common tobacco).